Reading from the N-terminus, the 279-residue chain is Prephenate dehydratase (279 aa).

Residues 2 to 178 enclose the Prephenate dehydratase domain; the sequence is KIAYLGPRGS…NSTRFWLLGK (177 aa). The 79-residue stretch at 194 to 272 folds into the ACT domain; sequence LALTLPDNLP…VNVRLLGNYS (79 aa).

The catalysed reaction is prephenate + H(+) = 3-phenylpyruvate + CO2 + H2O. Its pathway is amino-acid biosynthesis; L-phenylalanine biosynthesis; phenylpyruvate from prephenate: step 1/1. This chain is Prephenate dehydratase (pheA), found in Lactococcus lactis subsp. cremoris (strain MG1363).